Consider the following 526-residue polypeptide: Chaperonin GroEL, chloroplastic (526 aa).

ATP is bound by residues 29 to 32 (TLGP), 86 to 90 (DGTTT), G412, 476 to 478 (DAA), and D492.

It belongs to the chaperonin (HSP60) family. In terms of assembly, forms a cylinder of 14 subunits composed of two heptameric rings stacked back-to-back. Interacts with the co-chaperonin GroES.

The protein localises to the plastid. It is found in the chloroplast. The catalysed reaction is ATP + H2O + a folded polypeptide = ADP + phosphate + an unfolded polypeptide.. In terms of biological role, together with its co-chaperonin GroES, plays an essential role in assisting protein folding. The GroEL-GroES system forms a nano-cage that allows encapsulation of the non-native substrate proteins and provides a physical environment optimized to promote and accelerate protein folding. The polypeptide is Chaperonin GroEL, chloroplastic (Cyanidioschyzon merolae (strain NIES-3377 / 10D) (Unicellular red alga)).